The following is a 100-amino-acid chain: Urease subunit gamma (100 aa).

The protein belongs to the urease gamma subunit family. Heterotrimer of UreA (gamma), UreB (beta) and UreC (alpha) subunits. Three heterotrimers associate to form the active enzyme.

It localises to the cytoplasm. The catalysed reaction is urea + 2 H2O + H(+) = hydrogencarbonate + 2 NH4(+). It functions in the pathway nitrogen metabolism; urea degradation; CO(2) and NH(3) from urea (urease route): step 1/1. This chain is Urease subunit gamma, found in Rhizobium etli (strain CIAT 652).